We begin with the raw amino-acid sequence, 211 residues long: Arginine exporter protein ArgO (211 aa).

Helical transmembrane passes span 1–21, 37–57, 68–88, 111–131, 147–167, and 179–199; these read MISY…PLGP, LMIA…GIFG, LLAL…FGAL, IIAT…DTFV, WFAL…ALLA, and AQRI…FQLA.

It belongs to the LysE/ArgO transporter (TC 2.A.75) family.

The protein resides in the cell inner membrane. The enzyme catalyses L-arginine(in) = L-arginine(out). Its function is as follows. Involved in the export of arginine. Important to control the intracellular level of arginine and the correct balance between arginine and lysine. The polypeptide is Arginine exporter protein ArgO (Salmonella paratyphi C (strain RKS4594)).